Here is a 63-residue protein sequence, read N- to C-terminus: Protein Wfdc21 (63 aa).

The N-terminal stretch at 1–24 (MKLGAFLLLVSLITLSLEVQELQA) is a signal peptide. Residues 25 to 63 (AVRPLQLLGTCAELCRGDWDCGPEEQCVSIGCSHICTTN) form the WAP; atypical domain. Disulfide bonds link C35–C56, C39–C51, and C45–C60.

As to expression, predominantly expressed in white adipose tissue and liver.

The protein resides in the secreted. Functionally, may promote activation of the metalloproteinase MMP2. The polypeptide is Protein Wfdc21 (Mus musculus (Mouse)).